We begin with the raw amino-acid sequence, 286 residues long: ATP synthase gamma chain (286 aa).

It belongs to the ATPase gamma chain family. F-type ATPases have 2 components, CF(1) - the catalytic core - and CF(0) - the membrane proton channel. CF(1) has five subunits: alpha(3), beta(3), gamma(1), delta(1), epsilon(1). CF(0) has three main subunits: a, b and c.

It is found in the cell membrane. Its function is as follows. Produces ATP from ADP in the presence of a proton gradient across the membrane. The gamma chain is believed to be important in regulating ATPase activity and the flow of protons through the CF(0) complex. The sequence is that of ATP synthase gamma chain from Ureaplasma parvum serovar 3 (strain ATCC 27815 / 27 / NCTC 11736).